The chain runs to 702 residues: K(+)-insensitive pyrophosphate-energized proton pump (702 aa).

Transmembrane regions (helical) follow at residues 3-23 (GIYL…ALTI), 63-83 (AVVF…GFLI), 130-150 (MLVA…LVGI), and 162-182 (VALG…GGIF). K184 lines the substrate pocket. Residues D187, D191, N214, and D217 each contribute to the Mg(2+) site. Transmembrane regions (helical) follow at residues 234-254 (AVTV…VPAM), 255-275 (TSMM…SILG), 294-314 (GFLV…AIVP), 329-349 (GFDL…LIWV), 379-399 (GLAI…AAII), and 407-427 (LFGI…VVAL). D435 contributes to the Mg(2+) binding site. 4 consecutive transmembrane segments (helical) span residues 466-486 (AVTK…LFAA), 517-537 (YVVV…SMGM), 586-606 (IIPS…ILGI), and 612-632 (AFSA…FVAI). Residues D642, D668, and D672 each contribute to the Ca(2+) site. K675 is a substrate binding site.

The protein belongs to the H(+)-translocating pyrophosphatase (TC 3.A.10) family. K(+)-insensitive subfamily. Homodimer. Mg(2+) is required as a cofactor.

The protein localises to the cell inner membrane. The enzyme catalyses diphosphate + H2O + H(+)(in) = 2 phosphate + 2 H(+)(out). Proton pump that utilizes the energy of pyrophosphate hydrolysis as the driving force for proton movement across the membrane. Generates a proton motive force. The chain is K(+)-insensitive pyrophosphate-energized proton pump from Rhodospirillum rubrum (strain ATCC 11170 / ATH 1.1.1 / DSM 467 / LMG 4362 / NCIMB 8255 / S1).